A 216-amino-acid polypeptide reads, in one-letter code: Elongation factor 1-beta (216 aa).

Positions Gly-71 to Ser-131 are disordered. The span at Ala-73 to Ala-89 shows a compositional bias: low complexity. The segment covering Asp-92–Glu-107 has biased composition (acidic residues). Residues Glu-108 to Gly-128 show a composition bias toward basic and acidic residues.

The protein belongs to the EF-1-beta/EF-1-delta family. In terms of assembly, EF-1 is composed of 4 subunits: alpha, beta (1B-alpha=beta'), delta (1B-beta), and gamma (1B-gamma).

In terms of biological role, EF-1-beta and EF-1-beta' stimulate the exchange of GDP bound to EF-1-alpha to GTP. The chain is Elongation factor 1-beta from Triticum aestivum (Wheat).